Here is a 581-residue protein sequence, read N- to C-terminus: Multidrug resistance-like ATP-binding protein MdlA (581 aa).

The ABC transmembrane type-1 domain maps to tyrosine 18 to arginine 303. The next 6 membrane-spanning stretches (helical) occupy residues isoleucine 23–isoleucine 43, glycine 53–leucine 73, valine 127–leucine 149, isoleucine 153–isoleucine 175, valine 247–valine 267, and phenylalanine 280–isoleucine 300. One can recognise an ABC transporter domain in the interval isoleucine 337–histidine 571. An ATP-binding site is contributed by glycine 369–serine 376.

The protein belongs to the ABC transporter superfamily. Drug exporter-2 (TC 3.A.1.117) family.

It localises to the cell membrane. The enzyme catalyses ATP + H2O + xenobioticSide 1 = ADP + phosphate + xenobioticSide 2.. This chain is Multidrug resistance-like ATP-binding protein MdlA (mdlA), found in Buchnera aphidicola subsp. Schizaphis graminum (strain Sg).